The following is a 189-amino-acid chain: Mercury resistance operon ORF3 (189 aa).

Residues M1 to A27 constitute a signal peptide (tat-type signal). Residues T38 to A189 form the Thioredoxin domain.

In terms of processing, predicted to be exported by the Tat system. The position of the signal peptide cleavage has not been experimentally proven.

It is found in the secreted. Functionally, probable mercury binding protein. The chain is Mercury resistance operon ORF3 from Streptomyces lividans.